The primary structure comprises 221 residues: Thiamine-phosphate synthase (221 aa).

4-amino-2-methyl-5-(diphosphooxymethyl)pyrimidine-binding positions include 46-50 (QFREK) and Asn-83. Mg(2+)-binding residues include Asp-84 and Asp-103. Ser-122 is a 4-amino-2-methyl-5-(diphosphooxymethyl)pyrimidine binding site. A 2-[(2R,5Z)-2-carboxy-4-methylthiazol-5(2H)-ylidene]ethyl phosphate-binding site is contributed by 149–151 (TQS). Lys-152 contacts 4-amino-2-methyl-5-(diphosphooxymethyl)pyrimidine. 2-[(2R,5Z)-2-carboxy-4-methylthiazol-5(2H)-ylidene]ethyl phosphate-binding positions include Gly-181 and 201–202 (IS).

The protein belongs to the thiamine-phosphate synthase family. The cofactor is Mg(2+).

It catalyses the reaction 2-[(2R,5Z)-2-carboxy-4-methylthiazol-5(2H)-ylidene]ethyl phosphate + 4-amino-2-methyl-5-(diphosphooxymethyl)pyrimidine + 2 H(+) = thiamine phosphate + CO2 + diphosphate. It carries out the reaction 2-(2-carboxy-4-methylthiazol-5-yl)ethyl phosphate + 4-amino-2-methyl-5-(diphosphooxymethyl)pyrimidine + 2 H(+) = thiamine phosphate + CO2 + diphosphate. The enzyme catalyses 4-methyl-5-(2-phosphooxyethyl)-thiazole + 4-amino-2-methyl-5-(diphosphooxymethyl)pyrimidine + H(+) = thiamine phosphate + diphosphate. It functions in the pathway cofactor biosynthesis; thiamine diphosphate biosynthesis; thiamine phosphate from 4-amino-2-methyl-5-diphosphomethylpyrimidine and 4-methyl-5-(2-phosphoethyl)-thiazole: step 1/1. In terms of biological role, condenses 4-methyl-5-(beta-hydroxyethyl)thiazole monophosphate (THZ-P) and 2-methyl-4-amino-5-hydroxymethyl pyrimidine pyrophosphate (HMP-PP) to form thiamine monophosphate (TMP). The protein is Thiamine-phosphate synthase of Actinobacillus succinogenes (strain ATCC 55618 / DSM 22257 / CCUG 43843 / 130Z).